We begin with the raw amino-acid sequence, 464 residues long: MSAGKLPEGWVIAPVSTVTTLIRGVTYKKEQAINYLKDDYLPLIRANNIQNGKFDTTDLVFVPKNLVKESQKISPEDIVIAMSSGSKSVVGKSAHQHLPFECSFGAFCGVLRPEKLIFSGFIAHFTKSSLYRNKISSLSAGANINNIKPASFDLINIPIPPLAEQKIIAEKLDTLLAQVDSTKARFEQIPQILKRFRQAVLGGAVNGKLTEKWRNFEPQHSVFKKLNFESILTELRNGLSSKPNESGVGHPILRISSVRAGHVDQNDIRFLECSESELNRHKLQDGDLLFTRYNGSLEFVGVCGLLKKLQHQNLLYPDKLIRARLTKDALPEYIEIFFSSPSARNAMMNCVKTTSGQKGISGKDIKSQVVLLPPVKEQAEIVRRVEQLFAYADTIEKQVNNALARVNNLTQSILAKAFRGELTAQWRAENPDLISGENSAAALLEKIKAERAASGGKKASRKKS.

It belongs to the type-I restriction system S methylase family. The type I restriction/modification system is composed of three polypeptides R, M and S. The restriction enzyme has stoichiometry R(2)M(2)S(1). The methyltransferase is composed of M(2)S(1). In terms of assembly, (Microbial infection) Interacts with Escherichia phage T7 protein Ocr; this interaction leads to the inhibition of the methyltransferase restriction enzyme M.EcoKI composed of M(2)S(1).

The specificity (S) subunit of a type I restriction enzyme; this subunit dictates DNA sequence specificity. The M and S subunits together form a methyltransferase (MTase) that methylates A-2 on the top and A-3 on the bottom strand of the sequence 5'-AACN(6)GTGC-3'. In the presence of the R subunit the complex can also act as an endonuclease, binding to the same target sequence but cutting the DNA some distance from this site. Whether the DNA is cut or modified depends on the methylation state of the target sequence. When the target site is unmodified, the DNA is cut. When the target site is hemimethylated, the complex acts as a maintenance MTase modifying the DNA so that both strands become methylated. After locating a non-methylated recognition site, the enzyme complex serves as a molecular motor that translocates DNA in an ATP-dependent manner until a collision occurs that triggers cleavage. This Escherichia coli (strain K12) protein is Type I restriction enzyme EcoKI specificity subunit.